The primary structure comprises 116 residues: uncharacterized protein (116 aa).

Belongs to the mimivirus L15/L51/R83 family.

This is an uncharacterized protein from Acanthamoeba polyphaga mimivirus (APMV).